Consider the following 206-residue polypeptide: Nucleoside triphosphate pyrophosphatase (206 aa).

D78 (proton acceptor) is an active-site residue.

It belongs to the Maf family. A divalent metal cation is required as a cofactor.

The protein resides in the cytoplasm. It carries out the reaction a ribonucleoside 5'-triphosphate + H2O = a ribonucleoside 5'-phosphate + diphosphate + H(+). It catalyses the reaction a 2'-deoxyribonucleoside 5'-triphosphate + H2O = a 2'-deoxyribonucleoside 5'-phosphate + diphosphate + H(+). Nucleoside triphosphate pyrophosphatase. May have a dual role in cell division arrest and in preventing the incorporation of modified nucleotides into cellular nucleic acids. This Prochlorococcus marinus (strain MIT 9312) protein is Nucleoside triphosphate pyrophosphatase.